The primary structure comprises 766 residues: Tripartite terminase subunit 1 (766 aa).

The C3H1-type zinc-finger motif lies at 191-219 (CSVCFEELCVTANQGEAVHRRLLECTCDH). Residue 683 to 690 (FSSVFHCG) participates in ATP binding.

The protein belongs to the herpesviridae TRM1 protein family. As to quaternary structure, associates with TRM2 and TRM3 to form the tripartite terminase complex. Interacts with portal protein.

The protein resides in the host nucleus. In terms of biological role, component of the molecular motor that translocates viral genomic DNA in empty capsid during DNA packaging. Forms a tripartite terminase complex together with TRM2 and TRM3 in the host cytoplasm. Once the complex reaches the host nucleus, it interacts with the capsid portal vertex. This portal forms a ring in which genomic DNA is translocated into the capsid. TRM1 carries an endonuclease activity that plays an important role for the cleavage of concatemeric viral DNA into unit length genomes. The protein is Tripartite terminase subunit 1 of Equus caballus (Horse).